A 453-amino-acid polypeptide reads, in one-letter code: Collagen alpha-4(IV) chain (453 aa).

Residues 1 to 218 (GPPGPPGAPG…PPGPMGDPGP (218 aa)) are disordered. Positions 1–222 (GPPGPPGAPG…MGDPGPIGFG (222 aa)) are triple-helical region. Pro residues-rich tracts occupy residues 26–44 (QGPP…PGPP), 60–72 (PGPP…PGPP), and 95–122 (PQGP…PLGP). The segment covering 153–162 (PEGTMGLPGM) has biased composition (low complexity). Residues 174 to 183 (PGLDGRRGED) show a composition bias toward basic and acidic residues. The span at 206–215 (APGPPGPMGD) shows a compositional bias: pro residues. The 226-residue stretch at 228–453 (GFLLVLHSQT…SRCQVCVKHS (226 aa)) folds into the Collagen IV NC1 domain. 6 disulfides stabilise this stretch: C243–C332, C276–C329, C288–C294, C351–C449, C385–C446, and C397–C404.

This sequence belongs to the type IV collagen family. As to quaternary structure, there are six type IV collagen isoforms, alpha 1(IV)-alpha 6(IV), each of which can form a triple helix structure with 2 other chains to generate type IV collagen network. The alpha 3(IV) chain forms a triple helical protomer with alpha 4(IV) and alpha 5(IV); this triple helical structure dimerizes through NC1-NC1 domain interactions such that the alpha 3(IV), alpha 4(IV) and alpha 5(IV) chains of one protomer connect with the alpha 5(IV), alpha 4(IV) and alpha 3(IV) chains of the opposite protomer, respectively. Associates with LAMB2 at the neuromuscular junction and in GBM. In terms of processing, prolines at the third position of the tripeptide repeating unit (G-X-Y) are hydroxylated in some or all of the chains. Post-translationally, type IV collagens contain numerous cysteine residues which are involved in inter- and intramolecular disulfide bonding. 12 of these, located in the NC1 domain, are conserved in all known type IV collagens. The trimeric structure of the NC1 domains is stabilized by covalent bonds between Lys and Met residues. As to expression, alpha 3 and alpha 4 type IV collagens are colocalized and present only in basement membranes of kidney, eye, cochlea, lung and brain.

Its subcellular location is the secreted. It is found in the extracellular space. The protein localises to the extracellular matrix. It localises to the basement membrane. Its function is as follows. Type IV collagen is the major structural component of glomerular basement membranes (GBM), forming a 'chicken-wire' meshwork together with laminins, proteoglycans and entactin/nidogen. The polypeptide is Collagen alpha-4(IV) chain (COL4A4) (Bos taurus (Bovine)).